The sequence spans 216 residues: Thiopurine S-methyltransferase (216 aa).

Residues W10, L45, E66, and R123 each coordinate S-adenosyl-L-methionine.

This sequence belongs to the class I-like SAM-binding methyltransferase superfamily. TPMT family.

Its subcellular location is the cytoplasm. The enzyme catalyses S-adenosyl-L-methionine + a thiopurine = S-adenosyl-L-homocysteine + a thiopurine S-methylether.. In Pseudomonas putida (strain ATCC 700007 / DSM 6899 / JCM 31910 / BCRC 17059 / LMG 24140 / F1), this protein is Thiopurine S-methyltransferase.